The primary structure comprises 173 residues: Shikimate kinase (173 aa).

14 to 19 (GAGKST) provides a ligand contact to ATP. Ser18 is a binding site for Mg(2+). Residues Asp36, Arg60, and Gly82 each contribute to the substrate site. Position 120 (Arg120) interacts with ATP. Arg140 is a substrate binding site. Gln157 is a binding site for ATP.

The protein belongs to the shikimate kinase family. In terms of assembly, monomer. Requires Mg(2+) as cofactor.

The protein localises to the cytoplasm. It catalyses the reaction shikimate + ATP = 3-phosphoshikimate + ADP + H(+). The protein operates within metabolic intermediate biosynthesis; chorismate biosynthesis; chorismate from D-erythrose 4-phosphate and phosphoenolpyruvate: step 5/7. In terms of biological role, catalyzes the specific phosphorylation of the 3-hydroxyl group of shikimic acid using ATP as a cosubstrate. The chain is Shikimate kinase from Buchnera aphidicola subsp. Schizaphis graminum (strain Sg).